The primary structure comprises 436 residues: Kynureninase (436 aa).

Pyridoxal 5'-phosphate contacts are provided by residues leucine 88, threonine 89, 116-119 (FPSD), aspartate 202, histidine 205, and tyrosine 227. Lysine 228 is modified (N6-(pyridoxal phosphate)lysine). 2 residues coordinate pyridoxal 5'-phosphate: tryptophan 280 and asparagine 308.

Belongs to the kynureninase family. As to quaternary structure, homodimer. Requires pyridoxal 5'-phosphate as cofactor.

It localises to the cytoplasm. The enzyme catalyses L-kynurenine + H2O = anthranilate + L-alanine + H(+). It catalyses the reaction 3-hydroxy-L-kynurenine + H2O = 3-hydroxyanthranilate + L-alanine + H(+). It participates in amino-acid degradation; L-kynurenine degradation; L-alanine and anthranilate from L-kynurenine: step 1/1. The protein operates within cofactor biosynthesis; NAD(+) biosynthesis; quinolinate from L-kynurenine: step 2/3. Functionally, catalyzes the cleavage of L-kynurenine (L-Kyn) and L-3-hydroxykynurenine (L-3OHKyn) into anthranilic acid (AA) and 3-hydroxyanthranilic acid (3-OHAA), respectively. The sequence is that of Kynureninase from Schistosoma japonicum (Blood fluke).